Consider the following 435-residue polypeptide: Serine/threonine-protein kinase ssn3 (435 aa).

Residues 49–377 (YRIVGFISSG…AREALEHPYF (329 aa)) enclose the Protein kinase domain. Residues 55–63 (ISSGTYGRV) and K79 each bind ATP. D181 serves as the catalytic Proton acceptor. Positions 398–407 (RRVTQDDNDI) are enriched in basic and acidic residues. The disordered stretch occupies residues 398–435 (RRVTQDDNDIRSGSLPGTKRSGLPDDSLMGRASKRIKE).

This sequence belongs to the protein kinase superfamily. CMGC Ser/Thr protein kinase family. CDC2/CDKX subfamily. As to quaternary structure, component of the srb8-11 complex, a regulatory module of the Mediator complex. Requires Mg(2+) as cofactor.

It localises to the nucleus. It catalyses the reaction L-seryl-[protein] + ATP = O-phospho-L-seryl-[protein] + ADP + H(+). The enzyme catalyses L-threonyl-[protein] + ATP = O-phospho-L-threonyl-[protein] + ADP + H(+). The catalysed reaction is [DNA-directed RNA polymerase] + ATP = phospho-[DNA-directed RNA polymerase] + ADP + H(+). Functionally, component of the srb8-11 complex. The srb8-11 complex is a regulatory module of the Mediator complex which is itself involved in regulation of basal and activated RNA polymerase II-dependent transcription. The srb8-11 complex may be involved in the transcriptional repression of a subset of genes regulated by Mediator. It may inhibit the association of the Mediator complex with RNA polymerase II to form the holoenzyme complex. The srb8-11 complex phosphorylates the C-terminal domain (CTD) of the largest subunit of RNA polymerase II. This is Serine/threonine-protein kinase ssn3 (ssn3) from Aspergillus terreus (strain NIH 2624 / FGSC A1156).